The chain runs to 345 residues: S-adenosylmethionine:tRNA ribosyltransferase-isomerase (345 aa).

It belongs to the QueA family. Monomer.

It localises to the cytoplasm. It carries out the reaction 7-aminomethyl-7-carbaguanosine(34) in tRNA + S-adenosyl-L-methionine = epoxyqueuosine(34) in tRNA + adenine + L-methionine + 2 H(+). It participates in tRNA modification; tRNA-queuosine biosynthesis. Its function is as follows. Transfers and isomerizes the ribose moiety from AdoMet to the 7-aminomethyl group of 7-deazaguanine (preQ1-tRNA) to give epoxyqueuosine (oQ-tRNA). The polypeptide is S-adenosylmethionine:tRNA ribosyltransferase-isomerase (Finegoldia magna (strain ATCC 29328 / DSM 20472 / WAL 2508) (Peptostreptococcus magnus)).